The primary structure comprises 38 residues: Alpha-amylase (38 aa).

The protein belongs to the glycosyl hydrolase 13 family. As to quaternary structure, monomer. The cofactor is Ca(2+). Chloride is required as a cofactor. In terms of tissue distribution, expressed by the venom gland.

The protein localises to the secreted. It catalyses the reaction Endohydrolysis of (1-&gt;4)-alpha-D-glucosidic linkages in polysaccharides containing three or more (1-&gt;4)-alpha-linked D-glucose units.. This Tityus serrulatus (Brazilian scorpion) protein is Alpha-amylase.